The sequence spans 386 residues: MERWPWPSGGAWLLVAARALLQLLRSDLRLGRPLLAALALLAALDWLCQRLLPPPAALVVLAGAGWIALSRLARPPRLPVATRAVLITGCDTGFGKETAKKLDAMGFTVLATVLDLNSPGALELRDLCSPRLKLLQMDLTKAEDISRVLEITKAHTASTGLWGLVNNAGLNIVVADVELSPVATFRKCMEVNFFGALELTKGLLPLLRHSRGRIVTVGSPAGDMPYPCLAAYGTSKAAIALLMDTFGCELLPWGIKVSIIKPGCFKTDAVTNVNLWEKRKQLLLANIPRELLQAYGEDYIEHVHGQFLNSLRMALPDLSPVVDAIIDALLAAQPRSRYYPGRGLGLMYFIHHYLPEGLRRCFLQNFFINHLLPRALRPGQHGPAPA.

82-111 (TRAVLITGCDTGFGKETAKKLDAMGFTVLA) contributes to the NAD(+) binding site. Residue Ser-219 participates in substrate binding. Tyr-232 (proton acceptor) is an active-site residue.

Belongs to the short-chain dehydrogenases/reductases (SDR) family. In terms of assembly, interacts with ligand-free cytoplasmic NR3C2. In terms of tissue distribution, highly expressed in kidney. Also found in colon and small intestine. Not expressed in the adrenal gland. Expressed in uterus.

It is found in the microsome. It localises to the endoplasmic reticulum. The enzyme catalyses an 11beta-hydroxysteroid + NAD(+) = an 11-oxosteroid + NADH + H(+). It catalyses the reaction corticosterone + NAD(+) = 11-dehydrocorticosterone + NADH + H(+). It carries out the reaction 11beta,17beta-dihydroxyandrost-4-ene-3-one + NAD(+) = 17beta-hydroxyandrost-4-ene-3,11-dione + NADH + H(+). The catalysed reaction is 11beta-hydroxyandrost-4-ene-3,17-dione + NAD(+) = androst-4-ene-3,11,17-trione + NADH + H(+). The protein operates within steroid metabolism. With respect to regulation, inhibited by glycyrrhetinic acid. Induced by progesterone, through the Ihh signaling pathway. Catalyzes the conversion of biologically active 11beta-hydroxyglucocorticoids (11beta-hydroxysteroid) such as corticosterone, to inactive 11-ketoglucocorticoids (11-oxosteroid) such as 11-dehydrocorticosterone, in the presence of NAD(+). Functions as a dehydrogenase (oxidase), thereby decreasing the concentration of active glucocorticoids, thus protecting the nonselective mineralocorticoid receptor from occupation by glucocorticoids. Plays an important role in maintaining glucocorticoids balance during preimplantation and protects the fetus from excessive maternal corticosterone exposure. Catalyzes the oxidation of 11beta-hydroxytestosterone (11beta,17beta-dihydroxyandrost-4-ene-3-one) to 11-ketotestosterone (17beta-hydroxyandrost-4-ene-3,11-dione), a major bioactive androgen. Catalyzes the conversion of 11beta-hydroxyandrostenedione (11beta-hydroxyandrost-4-ene-3,17-dione) to 11-ketoandrostenedione (androst-4-ene-3,11,17-trione), which can be further metabolized to 11-ketotestosterone. Converts 7-beta-25-dihydroxycholesterol to 7-oxo-25-hydroxycholesterol in vitro. 7-beta-25-dihydroxycholesterol (not 7-oxo-25-hydroxycholesterol) acts as a ligand for the G-protein-coupled receptor (GPCR) Epstein-Barr virus-induced gene 2 (EBI2) and may thereby regulate immune cell migration. The polypeptide is 11-beta-hydroxysteroid dehydrogenase type 2 (Hsd11b2) (Mus musculus (Mouse)).